We begin with the raw amino-acid sequence, 369 residues long: Phosphoribosyl pyrophosphate synthase-associated protein 2 (369 aa).

Met-1 is modified (N-acetylmethionine). A phosphoserine mark is found at Ser-219, Ser-227, and Ser-233.

The protein belongs to the ribose-phosphate pyrophosphokinase family. As to quaternary structure, binds to PRPS1 and PRPS2. As to expression, ubiquitous.

Its function is as follows. Seems to play a negative regulatory role in 5-phosphoribose 1-diphosphate synthesis. This is Phosphoribosyl pyrophosphate synthase-associated protein 2 (Prpsap2) from Rattus norvegicus (Rat).